The primary structure comprises 109 residues: Cell division protein ZapA (109 aa).

Positions 22 to 99 (EQQDALNMAA…IEQALLEQGR (78 aa)) form a coiled coil.

The protein belongs to the ZapA family. Type 1 subfamily. As to quaternary structure, homodimer. Interacts with FtsZ.

The protein resides in the cytoplasm. Activator of cell division through the inhibition of FtsZ GTPase activity, therefore promoting FtsZ assembly into bundles of protofilaments necessary for the formation of the division Z ring. It is recruited early at mid-cell but it is not essential for cell division. This chain is Cell division protein ZapA, found in Yersinia pseudotuberculosis serotype O:1b (strain IP 31758).